We begin with the raw amino-acid sequence, 444 residues long: Phosphoglucosamine mutase (444 aa).

The active-site Phosphoserine intermediate is Ser-104. Mg(2+) contacts are provided by Ser-104, Asp-243, Asp-245, and Asp-247. Ser-104 bears the Phosphoserine mark.

It belongs to the phosphohexose mutase family. Requires Mg(2+) as cofactor. Post-translationally, activated by phosphorylation.

It carries out the reaction alpha-D-glucosamine 1-phosphate = D-glucosamine 6-phosphate. Its function is as follows. Catalyzes the conversion of glucosamine-6-phosphate to glucosamine-1-phosphate. This Neisseria gonorrhoeae (strain ATCC 700825 / FA 1090) protein is Phosphoglucosamine mutase.